The following is a 91-amino-acid chain: Large ribosomal subunit protein bL27 (91 aa).

This sequence belongs to the bacterial ribosomal protein bL27 family.

The protein is Large ribosomal subunit protein bL27 of Chromobacterium violaceum (strain ATCC 12472 / DSM 30191 / JCM 1249 / CCUG 213 / NBRC 12614 / NCIMB 9131 / NCTC 9757 / MK).